A 324-amino-acid chain; its full sequence is Holliday junction branch migration complex subunit RuvB (324 aa).

Positions 1–180 are large ATPase domain (RuvB-L); the sequence is MKSISCGKEY…FGIPLHLEFY (180 aa). ATP contacts are provided by residues isoleucine 19, arginine 20, glycine 61, lysine 64, threonine 65, threonine 66, 127-129, arginine 170, tyrosine 180, and arginine 217; that span reads EDF. A Mg(2+)-binding site is contributed by threonine 65. The tract at residues 181-251 is small ATPAse domain (RuvB-S); that stretch reads SFEELVNIIK…VADSVLLKLG (71 aa). The segment at 254-324 is head domain (RuvB-H); sequence KMGLNKLDMN…TDQAKEYLSL (71 aa). Positions 307 and 312 each coordinate DNA.

Belongs to the RuvB family. In terms of assembly, homohexamer. Forms an RuvA(8)-RuvB(12)-Holliday junction (HJ) complex. HJ DNA is sandwiched between 2 RuvA tetramers; dsDNA enters through RuvA and exits via RuvB. An RuvB hexamer assembles on each DNA strand where it exits the tetramer. Each RuvB hexamer is contacted by two RuvA subunits (via domain III) on 2 adjacent RuvB subunits; this complex drives branch migration. In the full resolvosome a probable DNA-RuvA(4)-RuvB(12)-RuvC(2) complex forms which resolves the HJ.

Its subcellular location is the cytoplasm. It catalyses the reaction ATP + H2O = ADP + phosphate + H(+). Functionally, the RuvA-RuvB-RuvC complex processes Holliday junction (HJ) DNA during genetic recombination and DNA repair, while the RuvA-RuvB complex plays an important role in the rescue of blocked DNA replication forks via replication fork reversal (RFR). RuvA specifically binds to HJ cruciform DNA, conferring on it an open structure. The RuvB hexamer acts as an ATP-dependent pump, pulling dsDNA into and through the RuvAB complex. RuvB forms 2 homohexamers on either side of HJ DNA bound by 1 or 2 RuvA tetramers; 4 subunits per hexamer contact DNA at a time. Coordinated motions by a converter formed by DNA-disengaged RuvB subunits stimulates ATP hydrolysis and nucleotide exchange. Immobilization of the converter enables RuvB to convert the ATP-contained energy into a lever motion, pulling 2 nucleotides of DNA out of the RuvA tetramer per ATP hydrolyzed, thus driving DNA branch migration. The RuvB motors rotate together with the DNA substrate, which together with the progressing nucleotide cycle form the mechanistic basis for DNA recombination by continuous HJ branch migration. Branch migration allows RuvC to scan DNA until it finds its consensus sequence, where it cleaves and resolves cruciform DNA. The sequence is that of Holliday junction branch migration complex subunit RuvB from Wolbachia sp. subsp. Drosophila simulans (strain wRi).